Consider the following 239-residue polypeptide: Tryptophan synthase alpha chain (239 aa).

Active-site proton acceptor residues include glutamate 34 and aspartate 45.

This sequence belongs to the TrpA family. As to quaternary structure, tetramer of two alpha and two beta chains.

The catalysed reaction is (1S,2R)-1-C-(indol-3-yl)glycerol 3-phosphate + L-serine = D-glyceraldehyde 3-phosphate + L-tryptophan + H2O. The protein operates within amino-acid biosynthesis; L-tryptophan biosynthesis; L-tryptophan from chorismate: step 5/5. The alpha subunit is responsible for the aldol cleavage of indoleglycerol phosphate to indole and glyceraldehyde 3-phosphate. In Thermotoga petrophila (strain ATCC BAA-488 / DSM 13995 / JCM 10881 / RKU-1), this protein is Tryptophan synthase alpha chain.